A 384-amino-acid polypeptide reads, in one-letter code: Spermidine/putrescine import ATP-binding protein PotA (384 aa).

The region spanning 6-238 is the ABC transporter domain; that stretch reads ITFNNVSKTF…PINHFVANFI (233 aa). An ATP-binding site is contributed by 40–47; sequence GASGSGKS.

Belongs to the ABC transporter superfamily. Spermidine/putrescine importer (TC 3.A.1.11.1) family. In terms of assembly, the complex is composed of two ATP-binding proteins (PotA), two transmembrane proteins (PotB and PotC) and a solute-binding protein (PotD).

It localises to the cell membrane. It carries out the reaction ATP + H2O + polyamine-[polyamine-binding protein]Side 1 = ADP + phosphate + polyamineSide 2 + [polyamine-binding protein]Side 1.. Part of the ABC transporter complex PotABCD involved in spermidine/putrescine import. Responsible for energy coupling to the transport system. This Streptococcus pyogenes serotype M18 (strain MGAS8232) protein is Spermidine/putrescine import ATP-binding protein PotA.